We begin with the raw amino-acid sequence, 510 residues long: Membrane-bound transcription factor site-2 protease (510 aa).

Topologically, residues 1 to 3 are cytoplasmic; sequence MIP. The helical transmembrane segment at 4 to 24 threads the bilayer; that stretch reads VSLVVVVVGGWTAVYLADLVL. The Lumenal segment spans residues 25-74; the sequence is KSSVYFKHSYEDWLEKNGLSISPFHIRWQTSVFNRAFYSWGRRKARMLYQ. 2 consecutive transmembrane segments (helical) span residues 75 to 95 and 96 to 107; these read WFNF…FLLG and KTLMQTLAQMMA. Over 108–135 the chain is Lumenal; that stretch reads DSPSSSSSSSSSSSSSSSSSIHNEQVLQ. Residues 136–160 traverse the membrane as a helical segment; that stretch reads VVVPGINLPVNQLTYFFAAVLISGV. His-162 is a binding site for Zn(2+). Residue Glu-163 is part of the active site. Helical transmembrane passes span 165 to 177, 178 to 200, and 220 to 242; these read GHGI…QVRF, NGFG…TTHL, and FVLA…PFYY. His-166 contributes to the Zn(2+) binding site. Residues 243–437 are Lumenal-facing; that stretch reads TGVGVLITEV…LPVIVETFVK (195 aa). N-linked (GlcNAc...) asparagine glycosylation occurs at Asn-328. Transmembrane regions (helical) follow at residues 438–455 and 456–467; these read YLIS…VPCF and ALDGQWILNSFL. At 468–483 the chain is on the lumenal side; sequence DATLTSVIGDNDVKDL. A helical transmembrane segment spans residues 484–504; it reads IGFFILLGGSVLLAANVTLGL. The Cytoplasmic portion of the chain corresponds to 505–510; it reads WMVTAR.

It belongs to the peptidase M50A family. The cofactor is Zn(2+).

The protein resides in the membrane. It localises to the cytoplasm. Its subcellular location is the golgi apparatus membrane. It catalyses the reaction Cleaves several transcription factors that are type-2 transmembrane proteins within membrane-spanning domains. Known substrates include sterol regulatory element-binding protein (SREBP) -1, SREBP-2 and forms of the transcriptional activator ATF6. SREBP-2 is cleaved at the site 477-DRSRILL-|-CVLTFLCLSFNPLTSLLQWGGA-505. The residues Asn-Pro, 11 residues distal to the site of cleavage in the membrane-spanning domain, are important for cleavage by S2P endopeptidase. Replacement of either of these residues does not prevent cleavage, but there is no cleavage if both of these residues are replaced.. Zinc metalloprotease that mediates intramembrane proteolysis of proteins such as ATF6, ATF6B, SREBF1/SREBP1 and SREBF2/SREBP2. Catalyzes the second step in the proteolytic activation of the sterol regulatory element-binding proteins (SREBPs) SREBF1/SREBP1 and SREBF2/SREBP2: cleaves SREBPs within the first transmembrane segment, thereby releasing the N-terminal segment with a portion of the transmembrane segment attached. Mature N-terminal SREBP fragments shuttle to the nucleus and activate gene transcription. Also mediates the second step in the proteolytic activation of the cyclic AMP-dependent transcription factor ATF-6 (ATF6 and ATF6B). Involved in intramembrane proteolysis during bone formation. In astrocytes and osteoblasts, upon DNA damage and ER stress, mediates the second step of the regulated intramembrane proteolytic activation of the transcription factor CREB3L1, leading to the inhibition of cell-cycle progression. The protein is Membrane-bound transcription factor site-2 protease (MBTPS2) of Cricetulus griseus (Chinese hamster).